We begin with the raw amino-acid sequence, 238 residues long: 2-C-methyl-D-erythritol 4-phosphate cytidylyltransferase (238 aa).

This sequence belongs to the IspD/TarI cytidylyltransferase family. IspD subfamily.

It catalyses the reaction 2-C-methyl-D-erythritol 4-phosphate + CTP + H(+) = 4-CDP-2-C-methyl-D-erythritol + diphosphate. It participates in isoprenoid biosynthesis; isopentenyl diphosphate biosynthesis via DXP pathway; isopentenyl diphosphate from 1-deoxy-D-xylulose 5-phosphate: step 2/6. Its function is as follows. Catalyzes the formation of 4-diphosphocytidyl-2-C-methyl-D-erythritol from CTP and 2-C-methyl-D-erythritol 4-phosphate (MEP). The polypeptide is 2-C-methyl-D-erythritol 4-phosphate cytidylyltransferase (Aliivibrio fischeri (strain MJ11) (Vibrio fischeri)).